The chain runs to 159 residues: ATP synthase subunit b (159 aa).

A helical transmembrane segment spans residues Asn-2 to Val-22.

The protein belongs to the ATPase B chain family. As to quaternary structure, F-type ATPases have 2 components, F(1) - the catalytic core - and F(0) - the membrane proton channel. F(1) has five subunits: alpha(3), beta(3), gamma(1), delta(1), epsilon(1). F(0) has three main subunits: a(1), b(2) and c(10-14). The alpha and beta chains form an alternating ring which encloses part of the gamma chain. F(1) is attached to F(0) by a central stalk formed by the gamma and epsilon chains, while a peripheral stalk is formed by the delta and b chains.

It is found in the cell membrane. Functionally, f(1)F(0) ATP synthase produces ATP from ADP in the presence of a proton or sodium gradient. F-type ATPases consist of two structural domains, F(1) containing the extramembraneous catalytic core and F(0) containing the membrane proton channel, linked together by a central stalk and a peripheral stalk. During catalysis, ATP synthesis in the catalytic domain of F(1) is coupled via a rotary mechanism of the central stalk subunits to proton translocation. In terms of biological role, component of the F(0) channel, it forms part of the peripheral stalk, linking F(1) to F(0). The chain is ATP synthase subunit b from Clostridium botulinum (strain Loch Maree / Type A3).